The following is a 257-amino-acid chain: Diphthine synthase (257 aa).

Residues leucine 9, aspartate 85, valine 88, 113 to 114 (SI), leucine 164, alanine 209, and histidine 234 contribute to the S-adenosyl-L-methionine site.

It belongs to the diphthine synthase family. In terms of assembly, homodimer.

The catalysed reaction is 2-[(3S)-amino-3-carboxypropyl]-L-histidyl-[translation elongation factor 2] + 3 S-adenosyl-L-methionine = diphthine-[translation elongation factor 2] + 3 S-adenosyl-L-homocysteine + 3 H(+). It participates in protein modification; peptidyl-diphthamide biosynthesis. Its function is as follows. S-adenosyl-L-methionine-dependent methyltransferase that catalyzes the trimethylation of the amino group of the modified target histidine residue in translation elongation factor 2 (EF-2), to form an intermediate called diphthine. The three successive methylation reactions represent the second step of diphthamide biosynthesis. The protein is Diphthine synthase of Methanocaldococcus jannaschii (strain ATCC 43067 / DSM 2661 / JAL-1 / JCM 10045 / NBRC 100440) (Methanococcus jannaschii).